The primary structure comprises 261 residues: High-affinity zinc uptake system membrane protein ZnuB (261 aa).

The next 7 helical transmembrane spans lie at 8–28 (ALLT…FVVW), 54–74 (VNPY…MVWL), 84–104 (TLLG…VGLL), 125–145 (TDLI…IYFW), 171–191 (ILMI…GALI), 214–234 (VGWA…LSAF), and 236–256 (DTAA…LSLF).

Belongs to the ABC-3 integral membrane protein family.

It is found in the cell inner membrane. Functionally, involved in the high-affinity zinc uptake transport system. The chain is High-affinity zinc uptake system membrane protein ZnuB (znuB) from Haemophilus influenzae (strain ATCC 51907 / DSM 11121 / KW20 / Rd).